The sequence spans 210 residues: Sortase A (210 aa).

At methionine 1–arginine 5 the chain is on the cytoplasmic side. A helical membrane pass occupies residues isoleucine 6–phenylalanine 26. Residues tyrosine 27 to lysine 210 are Extracellular-facing. The active-site Proton donor/acceptor is the histidine 126. Cysteine 187 serves as the catalytic Acyl-thioester intermediate.

This sequence belongs to the bacterial sortase family. Class A subfamily.

The protein resides in the cell membrane. Its activity is regulated as follows. Inhibited by thiol-reactive reagents. Its function is as follows. Transpeptidase that anchors surface proteins to the cell wall. Recognizes and modifies its substrate by proteolytic cleavage of a C-terminal sorting signal. Following cleavage, a covalent intermediate is formed via a thioester bond between the sortase and its substrate, which is then transferred and covalently attached to the cell wall. This sortase recognizes a Leu-Pro-x-Thr-Gly (LPXTG) motif, which is cleaved by the sortase between the threonine and glycine residues. Important for growth in macrophages. May be critical in the early stages of inhalation anthrax. The protein is Sortase A of Bacillus anthracis.